A 186-amino-acid chain; its full sequence is MKSSPAELISEAKSSTQNSKMKRAVSVLDFILRLIAVVATLASAIAMGTTDESLPFFTQFIRFRAEYDDLPTLRLFVVASAFASGYLILSLPLSILHITRSSARRTRVILIILDMVMLTSLTAASSAAAAIVYLAHKGNAKANWFAFCQQYDSFCERISGSLIGSFIAIPLFIMLILFSALVLSKR.

Residues 1-26 (MKSSPAELISEAKSSTQNSKMKRAVS) are Cytoplasmic-facing. A helical transmembrane segment spans residues 27–47 (VLDFILRLIAVVATLASAIAM). Residues 48-74 (GTTDESLPFFTQFIRFRAEYDDLPTLR) lie on the Extracellular side of the membrane. Residues 75-95 (LFVVASAFASGYLILSLPLSI) form a helical membrane-spanning segment. Residues 96-107 (LHITRSSARRTR) lie on the Cytoplasmic side of the membrane. A helical transmembrane segment spans residues 108–128 (VILIILDMVMLTSLTAASSAA). Topologically, residues 129–161 (AAIVYLAHKGNAKANWFAFCQQYDSFCERISGS) are extracellular. Residues 162 to 182 (LIGSFIAIPLFIMLILFSALV) form a helical membrane-spanning segment. Residues 183–186 (LSKR) are Cytoplasmic-facing.

It belongs to the Casparian strip membrane proteins (CASP) family. In terms of assembly, homodimer and heterodimers.

It localises to the cell membrane. Its function is as follows. Regulates membrane-cell wall junctions and localized cell wall deposition. Required for establishment of the Casparian strip membrane domain (CSD) and the subsequent formation of Casparian strips, a cell wall modification of the root endodermis that determines an apoplastic barrier between the intraorganismal apoplasm and the extraorganismal apoplasm and prevents lateral diffusion. This chain is Casparian strip membrane protein 1, found in Lotus japonicus (Lotus corniculatus var. japonicus).